The sequence spans 176 residues: Large ribosomal subunit protein uL6 (176 aa).

This sequence belongs to the universal ribosomal protein uL6 family. Part of the 50S ribosomal subunit.

Its function is as follows. This protein binds to the 23S rRNA, and is important in its secondary structure. It is located near the subunit interface in the base of the L7/L12 stalk, and near the tRNA binding site of the peptidyltransferase center. The polypeptide is Large ribosomal subunit protein uL6 (Lactobacillus gasseri (strain ATCC 33323 / DSM 20243 / BCRC 14619 / CIP 102991 / JCM 1131 / KCTC 3163 / NCIMB 11718 / NCTC 13722 / AM63)).